The chain runs to 95 residues: uncharacterized protein (95 aa).

This is an uncharacterized protein from Saccharomyces cerevisiae (strain ATCC 204508 / S288c) (Baker's yeast).